Consider the following 349-residue polypeptide: Protein Wnt-7b (349 aa).

Positions 1 to 24 are cleaved as a signal peptide; sequence MHRNFRKWIFYVFLCFGVLYVKLG. Cystine bridges form between Cys73/Cys84, Cys123/Cys131, Cys133/Cys152, Cys200/Cys214, and Cys202/Cys209. 2 N-linked (GlcNAc...) asparagine glycosylation sites follow: Asn83 and Asn127. The O-palmitoleoyl serine; by PORCN moiety is linked to residue Ser206. Residues 238–266 form a disordered linker region; sequence VEVVRASRLRQPTFLRIKQLRSYQKPMET. Cystine bridges form between Cys278–Cys309, Cys294–Cys304, Cys308–Cys348, Cys324–Cys339, Cys326–Cys336, and Cys331–Cys332. N-linked (GlcNAc...) asparagine glycosylation is present at Asn295.

The protein belongs to the Wnt family. In terms of assembly, forms a soluble 1:1 complex with AFM; this prevents oligomerization and is required for prolonged biological activity. The complex with AFM may represent the physiological form in body fluids. Interacts with FZD1 and FZD10. Interacts with FZD4 (in vitro). Interacts with PORCN. Interacts with glypican GPC3. Interacts (via intrinsically disordered linker region) with RECK; interaction with RECK confers ligand selectivity for Wnt7 in brain endothelial cells and allows these cells to selectively respond to Wnt7. Palmitoleoylation is required for efficient binding to frizzled receptors. Depalmitoleoylation leads to Wnt signaling pathway inhibition. In terms of tissue distribution, moderately expressed in fetal brain, weakly expressed in fetal lung and kidney, and faintly expressed in adult brain, lung and prostate.

It localises to the secreted. It is found in the extracellular space. Its subcellular location is the extracellular matrix. Ligand for members of the frizzled family of seven transmembrane receptors that functions in the canonical Wnt/beta-catenin signaling pathway. Required for normal fusion of the chorion and the allantois during placenta development. Required for central nervous system (CNS) angiogenesis and blood-brain barrier regulation. The chain is Protein Wnt-7b (WNT7B) from Homo sapiens (Human).